The chain runs to 245 residues: Probable phosphatase PMI1003 (245 aa).

Histidine 7, histidine 9, histidine 15, histidine 40, glutamate 73, histidine 101, histidine 131, aspartate 192, and histidine 194 together coordinate Zn(2+).

It belongs to the PHP family. In terms of assembly, homotrimer. The cofactor is Zn(2+).

The polypeptide is Probable phosphatase PMI1003 (Proteus mirabilis (strain HI4320)).